A 132-amino-acid polypeptide reads, in one-letter code: Thioredoxin H4-2 (132 aa).

In terms of domain architecture, Thioredoxin spans 18–130 (DFKGGNVHVI…LEKKVQALAD (113 aa)). Catalysis depends on nucleophile residues Cys56 and Cys59. An intrachain disulfide couples Cys56 to Cys59.

It belongs to the thioredoxin family. Plant H-type subfamily.

It is found in the cytoplasm. Probable thiol-disulfide oxidoreductase that may be involved in the redox regulation of a number of cytosolic enzymes. The polypeptide is Thioredoxin H4-2 (Oryza sativa subsp. japonica (Rice)).